The following is a 417-amino-acid chain: Probable medium-chain specific acyl-CoA dehydrogenase 10, mitochondrial (417 aa).

Residues 1-15 (MLSRIATSSLGLSRS) constitute a mitochondrion transit peptide. Residues 148–157 (YCVTEPGAGS) and 181–183 (WIT) each bind FAD. Position 157 (Ser-157) interacts with substrate. 268–271 (DMTR) contacts substrate. Residues 306–307 (HQ) and 364–368 (QIFGG) each bind FAD. Residue Glu-391 is the Proton acceptor of the active site. Residue Gly-392 coordinates substrate. An FAD-binding site is contributed by 393 to 395 (TSQ).

It belongs to the acyl-CoA dehydrogenase family. Homotetramer. The cofactor is FAD. In terms of tissue distribution, expressed in the epidermis and intestine.

It localises to the mitochondrion matrix. The catalysed reaction is a medium-chain 2,3-saturated fatty acyl-CoA + oxidized [electron-transfer flavoprotein] + H(+) = a medium-chain (2E)-enoyl-CoA + reduced [electron-transfer flavoprotein]. It functions in the pathway lipid metabolism; mitochondrial fatty acid beta-oxidation. In terms of biological role, this enzyme is specific for acyl chain lengths of 4 to 16. In Caenorhabditis elegans, this protein is Probable medium-chain specific acyl-CoA dehydrogenase 10, mitochondrial (acdh-10).